A 238-amino-acid chain; its full sequence is Calmodulin-binding protein 25 (238 aa).

Residues 68–78 (STNTLSSTVSG) are compositionally biased toward polar residues. The segment at 68 to 87 (STNTLSSTVSGASDPEIIGG) is disordered. The Bipartite nuclear localization signal motif lies at 92-108 (KRNCLLTDGKAAKRRAR). Positions 125–134 (FRQMVQQVTG) match the VQ motif. The disordered stretch occupies residues 201 to 220 (SSVGLPSGKPSATADPGGSA).

As to quaternary structure, interacts with calmodulin (CaM). Interacts with WRKY25 and WRKY51. Expressed in leaves, flowers and siliques.

It is found in the nucleus. In terms of biological role, calmodulin-binding protein that functions as a negative regulator of osmotic stress tolerance. The polypeptide is Calmodulin-binding protein 25 (Arabidopsis thaliana (Mouse-ear cress)).